A 505-amino-acid polypeptide reads, in one-letter code: ATP synthase subunit alpha (505 aa).

Residue 170-177 coordinates ATP; sequence GDRQTGKT.

This sequence belongs to the ATPase alpha/beta chains family. In terms of assembly, F-type ATPases have 2 components, CF(1) - the catalytic core - and CF(0) - the membrane proton channel. CF(1) has five subunits: alpha(3), beta(3), gamma(1), delta(1), epsilon(1). CF(0) has four main subunits: a(1), b(1), b'(1) and c(9-12).

The protein resides in the cellular thylakoid membrane. The catalysed reaction is ATP + H2O + 4 H(+)(in) = ADP + phosphate + 5 H(+)(out). Its function is as follows. Produces ATP from ADP in the presence of a proton gradient across the membrane. The alpha chain is a regulatory subunit. In Prochlorococcus marinus (strain SARG / CCMP1375 / SS120), this protein is ATP synthase subunit alpha.